Consider the following 221-residue polypeptide: Josephin-like protein (221 aa).

The segment at 1–37 (MESPSARTLGNSLGDDSGNGNENGNGSGNGNTTMMPH) is disordered. Residues 9 to 20 (LGNSLGDDSGNG) show a composition bias toward low complexity. The Josephin domain occupies 36–214 (PHGIYHERQT…DCKDKSQQRW (179 aa)). Residue C49 is the Nucleophile of the active site. Catalysis depends on H152, which acts as the Proton acceptor.

It carries out the reaction Thiol-dependent hydrolysis of ester, thioester, amide, peptide and isopeptide bonds formed by the C-terminal Gly of ubiquitin (a 76-residue protein attached to proteins as an intracellular targeting signal).. In terms of biological role, may act as a deubiquitinating enzyme. The polypeptide is Josephin-like protein (Drosophila melanogaster (Fruit fly)).